The chain runs to 622 residues: Polyamine transporter 3 (622 aa).

Positions 1–47 are enriched in polar residues; that stretch reads MNRQESINSFNSDETSSLSDVESQQPQQYIPSESGSKSNMAPNQLKL. Positions 1–76 are disordered; sequence MNRQESINSF…VPDVNAPQSS (76 aa). Topologically, residues 1 to 182 are cytoplasmic; that stretch reads MNRQESINSF…WPAWIRWSYT (182 aa). Phosphoserine is present on Ser55. Thr98 carries the phosphothreonine modification. 2 positions are modified to phosphoserine: Ser101 and Ser132. The segment at 105–152 is disordered; the sequence is TSTAISRTRTRQIDGASSPSSNEDALESDNNEKGKEGDSSGANDEAPD. Residues 183-203 traverse the membrane as a helical segment; that stretch reads VLLSILVICVAYGSACISGGL. At 204–215 the chain is on the extracellular side; the sequence is GTVEKKYHVGME. A helical membrane pass occupies residues 216-236; it reads AAILSVSLMVIGFSLGPLIWS. Topologically, residues 237-245 are cytoplasmic; the sequence is PVSDLYGRR. A helical membrane pass occupies residues 246–266; that stretch reads VAYFVSMGLYVIFNIPCALAP. The Extracellular portion of the chain corresponds to 267–275; the sequence is NLGSLLACR. A helical membrane pass occupies residues 276–296; the sequence is FLCGVWSSSGLCLVGGSIADM. At 297-305 the chain is on the cytoplasmic side; sequence FPSETRGKA. A helical transmembrane segment spans residues 306–326; it reads IAFFAFAPYVGPVVGPLVNGF. The Extracellular segment spans residues 327–335; that stretch reads ISVSTGRMD. Residues 336-356 form a helical membrane-spanning segment; the sequence is LIFWVNMAFAGVMWIISSAIP. The Cytoplasmic portion of the chain corresponds to 357–416; that stretch reads ETYAPVILKRKAARLRKETGNPKIMTEQEAQGVSMGEMMRACLLRPLYFSVTEPVLVATC. The helical transmembrane segment at 417–437 threads the bilayer; it reads FYVCLIYSLLYAFFFAFPVIF. Topologically, residues 438–446 are extracellular; the sequence is GELYGYKDN. Residues 447–467 form a helical membrane-spanning segment; the sequence is LVGLMFIPIVIGALWALATTF. At 468 to 487 the chain is on the cytoplasmic side; it reads YCENKYLQIVKQRKPTPEDR. The chain crosses the membrane as a helical span at residues 488–508; the sequence is LLGAKIGAPFAAIALWILGAT. Over 509–512 the chain is Extracellular; it reads AYKH. Residues 513–533 traverse the membrane as a helical segment; that stretch reads IIWVGPASAGLAFGFGMVLIY. Topologically, residues 534-550 are cytoplasmic; sequence YSLNNYIIDCYVQYASS. Residues 551 to 571 form a helical membrane-spanning segment; it reads ALATKVFLRSAGGAAFPLFTI. Topologically, residues 572–583 are extracellular; the sequence is QMYHKLNLHWGS. The chain crosses the membrane as a helical span at residues 584 to 604; sequence WLLAFISTAMIALPFAFSYWG. Residues 605 to 622 are Cytoplasmic-facing; sequence KGLRHKLSKKDYSIDSIE.

It belongs to the major facilitator superfamily. DHA1 family. Polyamines/proton antiporter (TC 2.A.1.2.16) subfamily.

It localises to the cell membrane. In terms of biological role, cell membrane polyamine/proton antiporter, involved in the detoxification of excess polyamines in the cytoplasm. Recognizes spermine, but not spermidine. The sequence is that of Polyamine transporter 3 (TPO3) from Saccharomyces cerevisiae (strain ATCC 204508 / S288c) (Baker's yeast).